Here is an 83-residue protein sequence, read N- to C-terminus: MNNTAQQDVSALSFEQAVEELERIVSALERGDVALDKSIEIYERGEALKKHCEALLKAAEDRIEKIRLDRAGRPQGVEPLDAE.

It belongs to the XseB family. As to quaternary structure, heterooligomer composed of large and small subunits.

The protein localises to the cytoplasm. It carries out the reaction Exonucleolytic cleavage in either 5'- to 3'- or 3'- to 5'-direction to yield nucleoside 5'-phosphates.. Its function is as follows. Bidirectionally degrades single-stranded DNA into large acid-insoluble oligonucleotides, which are then degraded further into small acid-soluble oligonucleotides. This is Exodeoxyribonuclease 7 small subunit from Sinorhizobium medicae (strain WSM419) (Ensifer medicae).